A 534-amino-acid polypeptide reads, in one-letter code: Inorganic phosphate transporter 1-6 (534 aa).

At 1–29 the chain is on the cytoplasmic side; it reads MGGGGGEQQQLEVLHALDVAKTQWYHFTA. Residues 30 to 50 form a helical membrane-spanning segment; sequence IVVAGMGFFTDAYDLFCISLV. The Extracellular portion of the chain corresponds to 51 to 75; that stretch reads TKLLGRIYYRVDGSPSPGTLPPHVS. Residues 76-96 form a helical membrane-spanning segment; the sequence is ASVNGVAFVGTLSGQLFFGWL. The Cytoplasmic portion of the chain corresponds to 97-104; sequence GDKLGRKR. The helical transmembrane segment at 105–125 threads the bilayer; the sequence is VYGITLMLMVLCSLASALSFG. The Extracellular portion of the chain corresponds to 126–127; the sequence is HT. The helical transmembrane segment at 128–148 threads the bilayer; the sequence is PTSVMATLCFFRFWLGFGIGG. Residues 149–168 are Cytoplasmic-facing; sequence DYPLSATIMSEYANKKTRGA. The helical transmembrane segment at 169–189 threads the bilayer; the sequence is FIAAVFAMQGFGIITGGLVAI. The Extracellular portion of the chain corresponds to 190 to 216; sequence LVSASFRAAFPAPPYGEDPVASTPPQA. Residues 217 to 237 form a helical membrane-spanning segment; it reads DFVWRIILMLGALPAALTYYW. Over 238–294 the chain is Cytoplasmic; it reads RTKMPETARYTALVANNAKQAAADMSKVLQVVEMRNIGNNGGSRRPFGLFSGEFVRR. A helical membrane pass occupies residues 295-315; it reads HGLHLVGTSATWLLLDIAFYS. Residues 316–350 are Extracellular-facing; that stretch reads QNLFQKDIFSAVGWIPKAATMSALEELFRIARAQT. The helical transmembrane segment at 351–371 threads the bilayer; that stretch reads LIALCGTVPGYWFTVALIDVV. The Cytoplasmic segment spans residues 372–375; the sequence is GRFK. A helical transmembrane segment spans residues 376–396; the sequence is IQAVGFFMMTLFMLTLALPYH. Over 397-405 the chain is Extracellular; that stretch reads HWTAPGKNH. The helical transmembrane segment at 406–426 threads the bilayer; it reads VGFLLLYGLTFFFANFGPNST. Over 427–445 the chain is Cytoplasmic; the sequence is TFIVPAEIFPARLRATCHG. Residues 446–466 traverse the membrane as a helical segment; sequence ISAASGKLGAIVGSFGFLYLA. Topologically, residues 467–486 are extracellular; sequence QSPDRSKTEHGYPPGIGVRN. A helical transmembrane segment spans residues 487–507; it reads SLFLLAACNLLGLLFTFLVPE. Residues 508–534 lie on the Cytoplasmic side of the membrane; it reads SKGKSLEEMSGDAEAQEEAPPPLQTVL. A disordered region spans residues 514–534; that stretch reads EEMSGDAEAQEEAPPPLQTVL.

This sequence belongs to the major facilitator superfamily. Phosphate:H(+) symporter (TC 2.A.1.9) family. As to expression, highly expressed in leaves and at low levels in roots. Expressed in leaf xylem parenchyma cells.

It is found in the membrane. Its function is as follows. High-affinity transporter for external inorganic phosphate (Pi). Probably involved in Pi uptake, translocation and internal transport throughout the plant. This Oryza sativa subsp. japonica (Rice) protein is Inorganic phosphate transporter 1-6 (PHT1-6).